The chain runs to 409 residues: NADH-quinone oxidoreductase subunit D 1 (409 aa).

This sequence belongs to the complex I 49 kDa subunit family. In terms of assembly, NDH-1 is composed of 14 different subunits. Subunits NuoB, C, D, E, F, and G constitute the peripheral sector of the complex.

It is found in the cell inner membrane. It catalyses the reaction a quinone + NADH + 5 H(+)(in) = a quinol + NAD(+) + 4 H(+)(out). Its function is as follows. NDH-1 shuttles electrons from NADH, via FMN and iron-sulfur (Fe-S) centers, to quinones in the respiratory chain. The immediate electron acceptor for the enzyme in this species is believed to be ubiquinone. Couples the redox reaction to proton translocation (for every two electrons transferred, four hydrogen ions are translocated across the cytoplasmic membrane), and thus conserves the redox energy in a proton gradient. The protein is NADH-quinone oxidoreductase subunit D 1 of Solibacter usitatus (strain Ellin6076).